A 396-amino-acid polypeptide reads, in one-letter code: uncharacterized protein (396 aa).

It belongs to the NAD(P)-dependent epimerase/dehydratase family. The cofactor is NAD(+). NADP(+) serves as cofactor.

Functionally, putative nucleotide sugar epimerase/dehydrogenase. This is an uncharacterized protein from Sinorhizobium fredii (strain NBRC 101917 / NGR234).